We begin with the raw amino-acid sequence, 384 residues long: Mannitol-1-phosphate 5-dehydrogenase (384 aa).

Residue Ala4–Gly15 coordinates NAD(+).

Belongs to the mannitol dehydrogenase family.

The catalysed reaction is D-mannitol 1-phosphate + NAD(+) = beta-D-fructose 6-phosphate + NADH + H(+). This chain is Mannitol-1-phosphate 5-dehydrogenase, found in Lacticaseibacillus paracasei (strain ATCC 334 / BCRC 17002 / CCUG 31169 / CIP 107868 / KCTC 3260 / NRRL B-441) (Lactobacillus paracasei).